The sequence spans 725 residues: Gamma-tubulin complex component 5 (725 aa).

Positions 222–246 (TENEEKMSDNASASSGSDQGPSSRQ) are disordered. Residues 232 to 244 (ASASSGSDQGPSS) are compositionally biased toward low complexity.

The protein belongs to the TUBGCP family. As to quaternary structure, component of the gamma-tubulin ring complex (gTuRC) consisting of TUBGCP2, TUBGCP3, TUBGCP4, TUBGCP5 and TUBGCP6 and gamma-tubulin TUBG1 or TUBG2. TUBGCP2, TUBGCP3, TUBGCP4, TUBGCP5 and TUBGCP6 assemble in a 5:5:2:1:1 stoichiometry; each is associated with a gamma-tubulin, thereby arranging 14 gamma-tubulins in a helical manner. Gamma-tubulin at the first position is blocked by TUBGCP3 at the last position, allowing 13 protafilaments to grow into a microtubule. The gTuRC (via TUBGCP3 and TUBGCP6) interacts with ACTB and MZT1; the interactions form a luminal bridge that stabilizes the initial structure during complex assembly. The gTuRC (via TUBGCP2) interacts with MZT2A/MZT2B and CDK5RAP2 (via CM1 motif); the interactions play a role in gTuRC activation.

The protein localises to the cytoplasm. It is found in the cytoskeleton. Its subcellular location is the microtubule organizing center. It localises to the centrosome. In terms of biological role, component of the gamma-tubulin ring complex (gTuRC) which mediates microtubule nucleation. The gTuRC regulates the minus-end nucleation of alpha-beta tubulin heterodimers that grow into microtubule protafilaments, a critical step in centrosome duplication and spindle formation. In Macaca fascicularis (Crab-eating macaque), this protein is Gamma-tubulin complex component 5 (TUBGCP5).